The following is a 386-amino-acid chain: Delta(7)-sterol 5(6)-desaturase ERG3 (386 aa).

Transmembrane regions (helical) follow at residues 120-140 (LSLFIITTIFGWLLYFIVAYL), 172-192 (IPVMVLLTIPFFLLELNGYSF), and 206-226 (AILWQIPKFILFTDCGIYFLH). The region spanning 214 to 337 (FILFTDCGIY…FTTLWDRLGN (124 aa)) is the Fatty acid hydroxylase domain. Positions 226-230 (HRWLH) match the Histidine box-1 motif. The short motif at 239 to 243 (HKPHH) is the Histidine box-2 element. A helical transmembrane segment spans residues 272-292 (PLLFPLHKVLYLFLFTFVNFW). Residues 314-318 (HTVHH) carry the Histidine box-3 motif.

It belongs to the sterol desaturase family. Requires Fe cation as cofactor.

The protein localises to the endoplasmic reticulum membrane. It carries out the reaction a Delta(7)-sterol + 2 Fe(II)-[cytochrome b5] + O2 + 2 H(+) = a Delta(5),Delta(7)-sterol + 2 Fe(III)-[cytochrome b5] + 2 H2O. It functions in the pathway steroid metabolism; ergosterol biosynthesis; ergosterol from zymosterol: step 3/5. In terms of biological role, C-5 sterol desaturase; part of the third module of ergosterol biosynthesis pathway that includes the late steps of the pathwa. ERG3 catalyzes the introduction of a C-5 double bond in the B ring to produce 5-dehydroepisterol. The third module or late pathway involves the ergosterol synthesis itself through consecutive reactions that mainly occur in the endoplasmic reticulum (ER) membrane. Firstly, the squalene synthase ERG9 catalyzes the condensation of 2 farnesyl pyrophosphate moieties to form squalene, which is the precursor of all steroids. Squalene synthase is crucial for balancing the incorporation of farnesyl diphosphate (FPP) into sterol and nonsterol isoprene synthesis. Secondly, the squalene epoxidase ERG1 catalyzes the stereospecific oxidation of squalene to (S)-2,3-epoxysqualene, which is considered to be a rate-limiting enzyme in steroid biosynthesis. Then, the lanosterol synthase ERG7 catalyzes the cyclization of (S)-2,3 oxidosqualene to lanosterol, a reaction that forms the sterol core. In the next steps, lanosterol is transformed to zymosterol through a complex process involving various demethylation, reduction and desaturation reactions. The lanosterol 14-alpha-demethylase ERG11 (also known as CYP51) catalyzes C14-demethylation of lanosterol to produce 4,4'-dimethyl cholesta-8,14,24-triene-3-beta-ol, which is critical for ergosterol biosynthesis. The C-14 reductase ERG24 reduces the C14=C15 double bond of 4,4-dimethyl-cholesta-8,14,24-trienol to produce 4,4-dimethyl-cholesta-8,24-dienol. 4,4-dimethyl-cholesta-8,24-dienol is substrate of the C-4 demethylation complex ERG25-ERG26-ERG27 in which ERG25 catalyzes the three-step monooxygenation required for the demethylation of 4,4-dimethyl and 4alpha-methylsterols, ERG26 catalyzes the oxidative decarboxylation that results in a reduction of the 3-beta-hydroxy group at the C-3 carbon to an oxo group, and ERG27 is responsible for the reduction of the keto group on the C-3. ERG28 has a role as a scaffold to help anchor ERG25, ERG26 and ERG27 to the endoplasmic reticulum and ERG29 regulates the activity of the iron-containing C4-methylsterol oxidase ERG25. Then, the sterol 24-C-methyltransferase ERG6 catalyzes the methyl transfer from S-adenosyl-methionine to the C-24 of zymosterol to form fecosterol. The C-8 sterol isomerase ERG2 catalyzes the reaction which results in unsaturation at C-7 in the B ring of sterols and thus converts fecosterol to episterol. The sterol-C5-desaturase ERG3 then catalyzes the introduction of a C-5 double bond in the B ring to produce 5-dehydroepisterol. The C-22 sterol desaturase ERG5 further converts 5-dehydroepisterol into ergosta-5,7,22,24(28)-tetraen-3beta-ol by forming the C-22(23) double bond in the sterol side chain. Finally, ergosta-5,7,22,24(28)-tetraen-3beta-ol is substrate of the C-24(28) sterol reductase ERG4 to produce ergosterol. This is Delta(7)-sterol 5(6)-desaturase ERG3 from Candida albicans (strain SC5314 / ATCC MYA-2876) (Yeast).